Consider the following 129-residue polypeptide: Small ribosomal subunit protein uS11 (129 aa).

This sequence belongs to the universal ribosomal protein uS11 family. In terms of assembly, part of the 30S ribosomal subunit. Interacts with proteins S7 and S18. Binds to IF-3.

In terms of biological role, located on the platform of the 30S subunit, it bridges several disparate RNA helices of the 16S rRNA. Forms part of the Shine-Dalgarno cleft in the 70S ribosome. This is Small ribosomal subunit protein uS11 from Lysinibacillus sphaericus (strain C3-41).